The chain runs to 438 residues: Delta(14)-sterol reductase ERG24 (438 aa).

Over 1–13 (MVSALNPRTTEFE) the chain is Lumenal. A helical transmembrane segment spans residues 14 to 34 (FGGLIGALGISIGLPVFTIIL). The Cytoplasmic segment spans residues 35-71 (NQMIRPDYFIKGFFQNFDIVELWNGIKPLRYYLGNRE). Residues 72 to 90 (LWTVYCLWYGILAVLDVIL) traverse the membrane as a helical segment. Residues 91–109 (PGRVMKGVQLRDGSKLSYK) are Lumenal-facing. Residues 110–127 (INGIAMSTTLVLVLAIRW) traverse the membrane as a helical segment. Over 128–147 (KLTDGQLPELQYLYENHVSL) the chain is Cytoplasmic. Residues 148-172 (CIISILFSFFLATYCYVASFIPLIF) traverse the membrane as a helical segment. Residues 173-242 (KKNGNGKREK…LHHHYLKTGK (70 aa)) are Lumenal-facing. A helical membrane pass occupies residues 243–263 (INDALVLVNFLQGFYIFDGVL). The Cytoplasmic portion of the chain corresponds to 264 to 308 (NEEGVLTMMDITTDGFGFMLAFGDLSLVPFTYSLQARYLSVSPVE). The chain crosses the membrane as a helical span at residues 309-328 (LGWVKVVGILAIMFLGFHIF). Topologically, residues 329–368 (HSANKQKSEFRQGKLENLKSIQTKRGTKLLCDGWWAKSQH) are lumenal. NADP(+) is bound by residues Lys335, Arg339, Leu358, Trp363, 370–371 (NY), Asp410, 414–418 (CRLKY), and Tyr425. A helical transmembrane segment spans residues 369-387 (INYFGDWLISLSWCLATWF). Residues 388–438 (QTPLTYYYSLYFATLLLHRQQRDEHKCRLKYGENWEEYERKVPYKIIPYVY) lie on the Cytoplasmic side of the membrane.

The protein belongs to the ERG4/ERG24 family.

Its subcellular location is the membrane. The enzyme catalyses 4,4-dimethyl-5alpha-cholesta-8,24-dien-3beta-ol + NADP(+) = 4,4-dimethyl-5alpha-cholesta-8,14,24-trien-3beta-ol + NADPH + H(+). Its pathway is steroid biosynthesis; zymosterol biosynthesis; zymosterol from lanosterol: step 2/6. Inhibited by the morpholine antifungal drug fenpropimorph. In terms of biological role, delta(14)-sterol reductase; part of the third module of ergosterol biosynthesis pathway that includes the late steps of the pathway. ERG24 reduces the C14=C15 double bond of 4,4-dimethyl-cholesta-8,14,24-trienol to produce 4,4-dimethyl-cholesta-8,24-dienol. The third module or late pathway involves the ergosterol synthesis itself through consecutive reactions that mainly occur in the endoplasmic reticulum (ER) membrane. Firstly, the squalene synthase ERG9 catalyzes the condensation of 2 farnesyl pyrophosphate moieties to form squalene, which is the precursor of all steroids. Squalene synthase is crucial for balancing the incorporation of farnesyl diphosphate (FPP) into sterol and nonsterol isoprene synthesis. Secondly, the squalene epoxidase ERG1 catalyzes the stereospecific oxidation of squalene to (S)-2,3-epoxysqualene, which is considered to be a rate-limiting enzyme in steroid biosynthesis. Then, the lanosterol synthase ERG7 catalyzes the cyclization of (S)-2,3 oxidosqualene to lanosterol, a reaction that forms the sterol core. In the next steps, lanosterol is transformed to zymosterol through a complex process involving various demethylation, reduction and desaturation reactions. The lanosterol 14-alpha-demethylase ERG11 (also known as CYP51) catalyzes C14-demethylation of lanosterol to produce 4,4'-dimethyl cholesta-8,14,24-triene-3-beta-ol, which is critical for ergosterol biosynthesis. The C-14 reductase ERG24 reduces the C14=C15 double bond of 4,4-dimethyl-cholesta-8,14,24-trienol to produce 4,4-dimethyl-cholesta-8,24-dienol. 4,4-dimethyl-cholesta-8,24-dienol is substrate of the C-4 demethylation complex ERG25-ERG26-ERG27 in which ERG25 catalyzes the three-step monooxygenation required for the demethylation of 4,4-dimethyl and 4alpha-methylsterols, ERG26 catalyzes the oxidative decarboxylation that results in a reduction of the 3-beta-hydroxy group at the C-3 carbon to an oxo group, and ERG27 is responsible for the reduction of the keto group on the C-3. ERG28 has a role as a scaffold to help anchor ERG25, ERG26 and ERG27 to the endoplasmic reticulum and ERG29 regulates the activity of the iron-containing C4-methylsterol oxidase ERG25. Then, the sterol 24-C-methyltransferase ERG6 catalyzes the methyl transfer from S-adenosyl-methionine to the C-24 of zymosterol to form fecosterol. The C-8 sterol isomerase ERG2 catalyzes the reaction which results in unsaturation at C-7 in the B ring of sterols and thus converts fecosterol to episterol. The sterol-C5-desaturase ERG3 then catalyzes the introduction of a C-5 double bond in the B ring to produce 5-dehydroepisterol. The C-22 sterol desaturase ERG5 further converts 5-dehydroepisterol into ergosta-5,7,22,24(28)-tetraen-3beta-ol by forming the C-22(23) double bond in the sterol side chain. Finally, ergosta-5,7,22,24(28)-tetraen-3beta-ol is substrate of the C-24(28) sterol reductase ERG4 to produce ergosterol. In Saccharomyces cerevisiae (strain ATCC 204508 / S288c) (Baker's yeast), this protein is Delta(14)-sterol reductase ERG24.